The primary structure comprises 378 residues: GDP-mannose 3,5-epimerase 1 (378 aa).

NAD(+) is bound by residues 36–62, Asp60, and Asp80; that span reads GAGGFIGSHIARRLKSEGHYIIASDWK. Residues Gly105 and 145-147 contribute to the substrate site; that span reads SAC. Positions 175 and 179 each coordinate NAD(+). The active-site Proton acceptor is the Tyr175. Substrate is bound by residues Asn204, 217–219, Lys226, 242–244, Arg307, and Ser357; these read EKA and QTR.

It belongs to the NAD(P)-dependent epimerase/dehydratase family. As to quaternary structure, homodimer. It depends on NAD(+) as a cofactor.

The enzyme catalyses GDP-alpha-D-mannose = GDP-beta-L-gulose. It catalyses the reaction GDP-beta-L-gulose = GDP-beta-L-galactose. It participates in cofactor biosynthesis; L-ascorbate biosynthesis via GDP-alpha-D-mannose pathway; L-ascorbate from GDP-alpha-D-mannose: step 1/5. With respect to regulation, strongly activated by NAD. Activated by NADP. Slightly activated by NADH and NADPH. Inhibited by GDP. Functionally, catalyzes a reversible epimerization of GDP-D-mannose that precedes the committed step in the biosynthesis of vitamin C (L-ascorbate), resulting in the hydrolysis of the highly energetic glycosyl-pyrophosphoryl linkage. Able to catalyze 2 distinct epimerization reactions and can release both GDP-L-galactose and GDP-L-gulose from GDP-mannose. The protein is GDP-mannose 3,5-epimerase 1 (GME-1) of Oryza sativa subsp. japonica (Rice).